Consider the following 405-residue polypeptide: Tyrosine--tRNA ligase (405 aa).

Tyr-35 provides a ligand contact to L-tyrosine. Residues Ala-40–His-49 carry the 'HIGH' region motif. Residues Tyr-166 and Gln-170 each contribute to the L-tyrosine site. A 'KMSKS' region motif is present at residues Lys-226–Ser-230. Lys-229 contributes to the ATP binding site. An S4 RNA-binding domain is found at Ile-340–Ile-405.

The protein belongs to the class-I aminoacyl-tRNA synthetase family. TyrS type 1 subfamily. As to quaternary structure, homodimer.

It localises to the cytoplasm. The enzyme catalyses tRNA(Tyr) + L-tyrosine + ATP = L-tyrosyl-tRNA(Tyr) + AMP + diphosphate + H(+). Functionally, catalyzes the attachment of tyrosine to tRNA(Tyr) in a two-step reaction: tyrosine is first activated by ATP to form Tyr-AMP and then transferred to the acceptor end of tRNA(Tyr). The protein is Tyrosine--tRNA ligase of Borreliella burgdorferi (strain ATCC 35210 / DSM 4680 / CIP 102532 / B31) (Borrelia burgdorferi).